We begin with the raw amino-acid sequence, 274 residues long: Serine protease 28 (274 aa).

The signal sequence occupies residues 1 to 26; it reads MFRLLLLALSCLESTVFMASVSISRS. The Peptidase S1 domain occupies 31-274; it reads IVGGQRTPPG…SLAWIHQHIQ (244 aa). Cys-62 and Cys-78 are oxidised to a cystine. His-77 acts as the Charge relay system in catalysis. Residue Asn-106 is glycosylated (N-linked (GlcNAc...) asparagine). Asp-124 acts as the Charge relay system in catalysis. Intrachain disulfides connect Cys-158/Cys-233, Cys-191/Cys-214, and Cys-223/Cys-251. The Charge relay system role is filled by Ser-227.

This sequence belongs to the peptidase S1 family. In terms of assembly, homooligomer, heterodimer and heterotetramer. Able to form homo- and hetero- tetrameric structures. Heterotetramer is far more stable than the homotetramer. Expressed in embryos throughout the preimplantation period, during blastocyst hatching and embryo outgrowth. Found in uterus especially in glandular epithelium.

It localises to the secreted. Its activity is regulated as follows. Inhibited by benzamidine, (4-amidino-phenyl)-methane-sulfonyl (APMSF), N-p-tosyl-L-lysine chloromethylketone (TLCK), gabexate, mesylate, BABIM and trypsin soybean inhibitor (TSI). Its function is as follows. Involved in embryo hatching and implantation. The chain is Serine protease 28 (Prss28) from Mus musculus (Mouse).